A 312-amino-acid chain; its full sequence is GDP-L-fucose synthase (312 aa).

Residue 11–17 (GGRGMVG) coordinates NADP(+). Tyr-136 functions as the Proton donor/acceptor in the catalytic mechanism. NADP(+)-binding residues include Lys-140 and His-179. Residues Lys-187, Trp-202, and Arg-209 each contribute to the substrate site.

This sequence belongs to the NAD(P)-dependent epimerase/dehydratase family. Fucose synthase subfamily.

It carries out the reaction GDP-beta-L-fucose + NADP(+) = GDP-4-dehydro-alpha-D-rhamnose + NADPH + H(+). The protein operates within nucleotide-sugar biosynthesis; GDP-L-fucose biosynthesis via de novo pathway; GDP-L-fucose from GDP-alpha-D-mannose: step 2/2. Catalyzes the two-step NADP-dependent conversion of GDP-4-dehydro-6-deoxy-D-mannose to GDP-fucose, involving an epimerase and a reductase reaction. In Azorhizobium caulinodans (strain ATCC 43989 / DSM 5975 / JCM 20966 / LMG 6465 / NBRC 14845 / NCIMB 13405 / ORS 571), this protein is GDP-L-fucose synthase.